Reading from the N-terminus, the 173-residue chain is Membrane protein PM19L (173 aa).

Transmembrane regions (helical) follow at residues 9 to 29 (IAPL…FASW), 43 to 63 (GVAG…AGVV), 83 to 103 (LAAG…AFGL), and 124 to 144 (FVII…GGLF).

As to expression, expressed in roots, leaf blades, leaf sheaths, stems, spikelets and embryos.

The protein localises to the membrane. Functionally, may be involved in abiotic stress response through abscisic acid-dependent signaling. This chain is Membrane protein PM19L, found in Oryza sativa subsp. japonica (Rice).